The chain runs to 105 residues: Thioredoxin (105 aa).

Residues 1-105 (MASNVTDKSF…SLIEWINNNI (105 aa)) form the Thioredoxin domain. Cysteine 30 and cysteine 33 are joined by a disulfide.

This sequence belongs to the thioredoxin family.

Functionally, component of the thioredoxin-thioredoxin reductase system. Participates in various redox reactions through the reversible oxidation of its active center dithiol to a disulfide and catalyzes dithiol-disulfide exchange reactions. The protein is Thioredoxin (trxA) of Rickettsia bellii (strain RML369-C).